A 1581-amino-acid chain; its full sequence is Mediator of RNA polymerase II transcription subunit 1 (1581 aa).

Residues 1 to 670 form an interaction with the Mediator complex and THRA region; it reads MKAQGETEES…YGSSPLERQN (670 aa). Residues 16 to 590 are interaction with ESR1; that stretch reads MSSLLERLHA…SIKDRHESVG (575 aa). 2 interaction with the Mediator complex regions span residues 108–212 and 215–390; these read FYVE…GYLT and SGGH…SLQG. Residues 405–644 are interaction with THRA; the sequence is PLILNLIRHQ…MAGNTKNHPM (240 aa). The segment at 542-788 is interaction with VDR; it reads PASSPGYGMT…TDILSDIAEE (247 aa). Ser588 is subject to Phosphoserine. The LXXLL motif 1 signature appears at 604–608; it reads LTSLL. 4 disordered regions span residues 609–705, 791–819, 868–895, and 947–1566; these read QITG…HQTE, KLPSTSDDCPAIGTPLRDSSSSGHSQSTL, LSNSQSQSGFGEEYFDESSQSGDNDDFK, and EHHS…DFMI. Residues 622-632 show a composition bias toward pro residues; that stretch reads PTPPHHTPPPV. The interval 622-701 is interaction with PPARGC1A and THRA; that stretch reads PTPPHHTPPP…SSRLPPEKPK (80 aa). Residues 645 to 649 carry the LXXLL motif 2 motif; the sequence is LMNLL. Positions 655–675 are enriched in polar residues; it reads QDFSTLYGSSPLERQNSSSGS. The interval 656–1065 is interaction with ESR1; sequence DFSTLYGSSP…TPPIPKITIQ (410 aa). Ser664 bears the Phosphoserine mark. The segment at 681 to 715 is interaction with GATA1; sequence CSGSNKTKKKESSRLPPEKPKHQTEDDFQRELFSM. The span at 690-705 shows a compositional bias: basic and acidic residues; that stretch reads KESSRLPPEKPKHQTE. Position 794 is a phosphoserine (Ser794). Thr804 is subject to Phosphothreonine. Residues 807 to 819 show a composition bias toward polar residues; the sequence is RDSSSSGHSQSTL. Residues 874–901 carry the Integrase domain-binding motif (IBM) motif; it reads QSGFGEEYFDESSQSGDNDDFKGFASQA. Phosphoserine occurs at positions 886 and 952. The span at 962 to 973 shows a compositional bias: basic and acidic residues; the sequence is LGKEKTQKRVKE. Position 1031 is a phosphothreonine; by MAPK1 or MAPK3 (Thr1031). The segment covering 1033–1050 has biased composition (low complexity); sequence PTSTGGSKSPGSSGRSQT. 2 positions are modified to phosphothreonine: Thr1050 and Thr1056. 3 stretches are compositionally biased toward low complexity: residues 1077-1093, 1100-1111, and 1119-1156; these read SSHSQYTSSGSVSSSGS, SSSSSSSSASTS, and SEGSSSSKLSSSMYSSQGSSGSSQSKNSSQSGGKPGSS. Ser1156 bears the Phosphoserine mark. Residues 1162–1195 show a composition bias toward polar residues; it reads GLSSGSSSTKMKPQGKPSSLMNPSLSKPNISPSH. N6-acetyllysine is present on Lys1177. Phosphoserine is present on Ser1207. At Thr1215 the chain carries Phosphothreonine. Composition is skewed to low complexity over residues 1218–1227 and 1234–1293; these read SSKAKSPISS and MSGT…SKGK. At Ser1223 the chain carries Phosphoserine. Residues 1249 to 1421 are interaction with TP53; sequence LGSSGSLSQK…KPGESSGEGL (173 aa). Position 1302 is a phosphoserine (Ser1302). The segment covering 1330–1345 has biased composition (polar residues); the sequence is GVSTNSSSHPMSSKHN. At Ser1347 the chain carries Phosphoserine. Residues 1352–1364 are compositionally biased toward basic and acidic residues; the sequence is QGKREKSDKDKSK. Phosphoserine occurs at positions 1403 and 1433. 2 stretches are compositionally biased toward polar residues: residues 1425–1440 and 1448–1482; these read MASSKNYGSPLISGST and PSHSKSPAYTPQNLDSESESGSSIAEKSYQNSPSS. Thr1440 bears the Phosphothreonine mark. Thr1457 bears the Phosphothreonine; by MAPK1 or MAPK3 mark. Residues Ser1463, Ser1465, Ser1479, Ser1481, and Ser1482 each carry the phosphoserine modification. The segment covering 1496-1505 has biased composition (basic residues); it reads KHKKHKKEKK. The segment covering 1506–1522 has biased composition (basic and acidic residues); the sequence is KVKDKDRDRDRDKDRDK. At Lys1529 the chain carries N6-acetyllysine. Residues 1533–1552 show a composition bias toward polar residues; it reads WSKSPISSDQSLSMTSNTIL.

The protein belongs to the Mediator complex subunit 1 family. In terms of assembly, component of the Mediator complex, which is composed of MED1, MED4, MED6, MED7, MED8, MED9, MED10, MED11, MED12, MED13, MED13L, MED14, MED15, MED16, MED17, MED18, MED19, MED20, MED21, MED22, MED23, MED24, MED25, MED26, MED27, MED29, MED30, MED31, CCNC, CDK8 and CDC2L6/CDK11. The MED12, MED13, CCNC and CDK8 subunits form a distinct module termed the CDK8 module. Mediator containing the CDK8 module is less active than Mediator lacking this module in supporting transcriptional activation. Individual preparations of the Mediator complex lacking one or more distinct subunits have been variously termed ARC, CRSP, DRIP, PC2, SMCC and TRAP. This subunit specifically interacts with a number of nuclear receptors in a ligand-dependent fashion including AR, ESR1, ESR2, PPARA, PPARG, RORA, RXRA, RXRG, THRA, THRB and VDR. Interacts with CTNNB1, GABPA, GLI3, PPARGC1A and TP53. Interacts with GATA1 and YWHAH. Interacts with CLOCK; this interaction requires the presence of THRAP3. Interacts with CCAR1. Interacts with NR4A3. Interacts (via IBM motif) with PSIP1 (via IBD domain); phosphorylation increases its affinity for PSIP1. Interacts with USP22. Post-translationally, phosphorylated by MAPK1 or MAPK3 during G2/M phase which may enhance protein stability and promote entry into the nucleolus. Phosphorylation increases its interaction with PSIP1.

It localises to the nucleus. Component of the Mediator complex, a coactivator involved in the regulated transcription of nearly all RNA polymerase II-dependent genes. Mediator functions as a bridge to convey information from gene-specific regulatory proteins to the basal RNA polymerase II transcription machinery. Mediator is recruited to promoters by direct interactions with regulatory proteins and serves as a scaffold for the assembly of a functional preinitiation complex with RNA polymerase II and the general transcription factors. Acts as a coactivator for GATA1-mediated transcriptional activation during erythroid differentiation of K562 erythroleukemia cells. The chain is Mediator of RNA polymerase II transcription subunit 1 (MED1) from Pongo abelii (Sumatran orangutan).